Reading from the N-terminus, the 346-residue chain is DNA primase small subunit PriS (346 aa).

Residues D97, D99, and D280 contribute to the active site.

Belongs to the eukaryotic-type primase small subunit family. As to quaternary structure, heterodimer of a small subunit (PriS) and a large subunit (PriL). It depends on Mg(2+) as a cofactor. The cofactor is Mn(2+).

In terms of biological role, catalytic subunit of DNA primase, an RNA polymerase that catalyzes the synthesis of short RNA molecules used as primers for DNA polymerase during DNA replication. The small subunit contains the primase catalytic core and has DNA synthesis activity on its own. Binding to the large subunit stabilizes and modulates the activity, increasing the rate of DNA synthesis while decreasing the length of the DNA fragments, and conferring RNA synthesis capability. The DNA polymerase activity may enable DNA primase to also catalyze primer extension after primer synthesis. May also play a role in DNA repair. This chain is DNA primase small subunit PriS, found in Thermococcus kodakarensis (strain ATCC BAA-918 / JCM 12380 / KOD1) (Pyrococcus kodakaraensis (strain KOD1)).